The following is a 149-amino-acid chain: MMAVEQMPKKDWYSILGADPSANISDLKQKYQKLILMYHPDKQSTDVPAGTVEECVQKFIEIDQAWKILGNEETKREYDLQRCEDDLRNVGPVDAQVYLEEMSWNEGDHSFYLSCRCGGKYSVSKDEAEEVSLISCDTCSLIIELLHYN.

The J domain maps to 11-82 (DWYSILGADP…ETKREYDLQR (72 aa)). In terms of domain architecture, DPH-type MB spans 93 to 148 (VDAQVYLEEMSWNEGDHSFYLSCRCGGKYSVSKDEAEEVSLISCDTCSLIIELLHY). Residues Cys115, Cys117, Cys136, and Cys139 each coordinate Zn(2+).

It belongs to the DPH4 family. Monomer and homooligomer. Iron binding promotes oligomerization.

Its subcellular location is the cytoplasm. The protein resides in the cytoskeleton. The protein operates within protein modification; peptidyl-diphthamide biosynthesis. In terms of biological role, stimulates the ATPase activity of several Hsp70-type chaperones. This ability is enhanced by iron-binding. The iron-bound form is redox-active and can function as electron carrier. Plays a role in the diphthamide biosynthesis, a post-translational modification of histidine which occurs in translation elongation factor 2 (EEF2) which can be ADP-ribosylated by diphtheria toxin and by Pseudomonas exotoxin A (Eta). This is DnaJ homolog subfamily C member 24 from Homo sapiens (Human).